The primary structure comprises 881 residues: Valine--tRNA ligase (881 aa).

The 'HIGH' region signature appears at 49-59 (PNVTGKLHLGH). The short motif at 526-530 (KMSKS) is the 'KMSKS' region element. Position 529 (Lys-529) interacts with ATP. Residues 810 to 881 (LADLINLDEE…VRQRLADLEK (72 aa)) are a coiled coil.

It belongs to the class-I aminoacyl-tRNA synthetase family. ValS type 1 subfamily. As to quaternary structure, monomer.

The protein localises to the cytoplasm. It catalyses the reaction tRNA(Val) + L-valine + ATP = L-valyl-tRNA(Val) + AMP + diphosphate. Functionally, catalyzes the attachment of valine to tRNA(Val). As ValRS can inadvertently accommodate and process structurally similar amino acids such as threonine, to avoid such errors, it has a 'posttransfer' editing activity that hydrolyzes mischarged Thr-tRNA(Val) in a tRNA-dependent manner. In Bacillus cereus (strain ATCC 10987 / NRS 248), this protein is Valine--tRNA ligase.